Consider the following 587-residue polypeptide: Kelch-like protein 3 (587 aa).

A disordered region spans residues 1 to 24 (MEGESVKPSPQPTAQAEDEEKNRR). The BTB domain maps to 50–117 (CDVMIVAEDV…IYTAEIEVTE (68 aa)). Residues 152 to 254 (CLGIRAFADV…PRDYLVQTVE (103 aa)) enclose the BACK domain. The residue at position 295 (T295) is a Phosphothreonine. Kelch repeat units lie at residues 302 to 347 (VMIV…FMAG), 348 to 394 (HVYA…VLND), 396 to 441 (LYAV…VVEG), 442 to 490 (KLYA…VLSG), 491 to 537 (QLYA…AVNG), and 539 to 585 (LYVV…VIHK). Position 375 is a phosphothreonine (T375). A phosphoserine mark is found at S376 and S433.

The protein belongs to the KLHL3 family. In terms of assembly, homodimer. Component of the BCR(KLHL3) E3 ubiquitin ligase complex, at least composed of CUL3 and KLHL3 and RBX1. Interacts with CLDN8. Phosphorylation at Ser-433 by PKA or PKC decreases the interaction with WNK1 and WNK4, leading to inhibit their degradation by the BCR(KLHL3) complex. Phosphorylated at Ser-433 by PKC in response to angiotensin II signaling, decreasing ability to promote degradation of WNK1 and WNK4, leading to activation of Na-Cl cotransporter SLC12A3/NCC. Phosphorylation at Ser-433 is increased by insulin. Dephosphorylated at Ser-433 by calcineurin PPP3CA, promoting degradation of WNK1 and WNK4. In terms of tissue distribution, present at high level in brain and kidney (at protein level). Weakly expressed in other tissues. In kidney, predominantly localizes to the distal convoluted tubule (DCT) and collecting duct, with apical localization in the DCT (at protein level).

Its subcellular location is the cytoplasm. It is found in the cytosol. It localises to the cytoskeleton. It participates in protein modification; protein ubiquitination. Substrate-specific adapter of a BCR (BTB-CUL3-RBX1) E3 ubiquitin ligase complex that acts as a regulator of ion transport in the distal nephron. The BCR(KLHL3) complex acts by mediating ubiquitination and degradation of WNK1 and WNK4, two activators of Na-Cl cotransporter SLC12A3/NCC in distal convoluted tubule cells of kidney, thereby regulating NaCl reabsorption. The BCR(KLHL3) complex also mediates ubiquitination of CLDN8, a tight-junction protein required for paracellular chloride transport in the kidney, leading to its degradation. The polypeptide is Kelch-like protein 3 (Mus musculus (Mouse)).